Reading from the N-terminus, the 231-residue chain is NADH-ubiquinone oxidoreductase chain 4 (231 aa).

Transmembrane regions (helical) follow at residues 1–21, 34–54, 61–80, 84–106, 128–148, and 169–189; these read PIAGSMVLAAILLKLGGYGII, MFLPFIVLALWGAILANLTCL, SLIAYSSISHMGLVVAAIII, WGLTGAMTLMIAHGFTSSALFCL, ILPMTTTWWLLANLMNIATPP, and TIILLGLSMLITASYSLHMFL.

The protein belongs to the complex I subunit 4 family.

It localises to the mitochondrion membrane. It carries out the reaction a ubiquinone + NADH + 5 H(+)(in) = a ubiquinol + NAD(+) + 4 H(+)(out). Functionally, core subunit of the mitochondrial membrane respiratory chain NADH dehydrogenase (Complex I) that is believed to belong to the minimal assembly required for catalysis. Complex I functions in the transfer of electrons from NADH to the respiratory chain. The immediate electron acceptor for the enzyme is believed to be ubiquinone. The chain is NADH-ubiquinone oxidoreductase chain 4 (MT-ND4) from Atropoides picadoi (Picado's pit viper).